We begin with the raw amino-acid sequence, 125 residues long: Large ribosomal subunit protein bL12 (125 aa).

The protein belongs to the bacterial ribosomal protein bL12 family. In terms of assembly, homodimer. Part of the ribosomal stalk of the 50S ribosomal subunit. Forms a multimeric L10(L12)X complex, where L10 forms an elongated spine to which 2 to 4 L12 dimers bind in a sequential fashion. Binds GTP-bound translation factors.

In terms of biological role, forms part of the ribosomal stalk which helps the ribosome interact with GTP-bound translation factors. Is thus essential for accurate translation. The polypeptide is Large ribosomal subunit protein bL12 (Campylobacter curvus (strain 525.92)).